Here is a 27-residue protein sequence, read N- to C-terminus: Conotoxin Lo6/7b (27 aa).

3 disulfide bridges follow: Cys-2/Cys-16, Cys-9/Cys-19, and Cys-15/Cys-26. Tyrosine amide is present on Tyr-27.

Expressed by the venom duct.

Its subcellular location is the secreted. Functionally, 1 uM of this toxin does not show any effect on voltage-gated sodium and potassium channels. Does not show antibacterial activity on both Gram-negative and Gram-positive bacteria. The chain is Conotoxin Lo6/7b from Conasprella longurionis (Cone snail).